A 108-amino-acid polypeptide reads, in one-letter code: Translation initiation factor 1A (108 aa).

Positions 10 to 84 (IRVITPNKKS…EKGDIIYRYT (75 aa)) constitute an S1-like domain.

It belongs to the eIF-1A family.

In terms of biological role, seems to be required for maximal rate of protein biosynthesis. Enhances ribosome dissociation into subunits and stabilizes the binding of the initiator Met-tRNA(I) to 40 S ribosomal subunits. The chain is Translation initiation factor 1A from Picrophilus torridus (strain ATCC 700027 / DSM 9790 / JCM 10055 / NBRC 100828 / KAW 2/3).